Reading from the N-terminus, the 124-residue chain is uncharacterized protein (124 aa).

Disordered regions lie at residues 1–26 (MRRQ…QPRP) and 100–124 (IPGQ…GLRR). The segment covering 102-115 (GQQSRNCSLPQTKY) has biased composition (polar residues).

Its subcellular location is the cytoplasm. It localises to the cytoskeleton. It is found in the cilium basal body. This is an uncharacterized protein from Rattus norvegicus (Rat).